Here is a 259-residue protein sequence, read N- to C-terminus: Methionine aminopeptidase (259 aa).

Histidine 78 is a substrate binding site. A divalent metal cation-binding residues include aspartate 95, aspartate 106, and histidine 169. Histidine 176 lines the substrate pocket. Glutamate 202 contacts a divalent metal cation. Tryptophan 220 provides a ligand contact to substrate. Position 234 (glutamate 234) interacts with a divalent metal cation.

Belongs to the peptidase M24A family. Methionine aminopeptidase type 1 subfamily. Monomer. Co(2+) is required as a cofactor. Zn(2+) serves as cofactor. Requires Mn(2+) as cofactor. It depends on Fe(2+) as a cofactor.

The enzyme catalyses Release of N-terminal amino acids, preferentially methionine, from peptides and arylamides.. Removes the N-terminal methionine from nascent proteins. The N-terminal methionine is often cleaved when the second residue in the primary sequence is small and uncharged (Met-Ala-, Cys, Gly, Pro, Ser, Thr, or Val). Requires deformylation of the N(alpha)-formylated initiator methionine before it can be hydrolyzed. The chain is Methionine aminopeptidase from Rickettsia prowazekii (strain Madrid E).